A 349-amino-acid chain; its full sequence is AdoMet-dependent heme synthase (349 aa).

A Radical SAM core domain is found at 5–214 (TNAPRLIAWE…LHWFYEMQKE (210 aa)). Residues Cys-19, Cys-23, and Cys-26 each coordinate [4Fe-4S] cluster.

The protein belongs to the radical SAM superfamily. It depends on [4Fe-4S] cluster as a cofactor.

The catalysed reaction is Fe-coproporphyrin III + 2 S-adenosyl-L-methionine = heme b + 2 5'-deoxyadenosine + 2 L-methionine + 2 CO2. Its pathway is porphyrin-containing compound metabolism; protoheme biosynthesis. Functionally, involved in siroheme-dependent heme b biosynthesis. Catalyzes the conversion of Fe-coproporphyrin III into heme by the oxidative decarboxylation of two propionate side chains. In Methanosarcina barkeri (strain Fusaro / DSM 804), this protein is AdoMet-dependent heme synthase.